A 199-amino-acid chain; its full sequence is N-(5'-phosphoribosyl)anthranilate isomerase (199 aa).

Belongs to the TrpF family.

It catalyses the reaction N-(5-phospho-beta-D-ribosyl)anthranilate = 1-(2-carboxyphenylamino)-1-deoxy-D-ribulose 5-phosphate. Its pathway is amino-acid biosynthesis; L-tryptophan biosynthesis; L-tryptophan from chorismate: step 3/5. The sequence is that of N-(5'-phosphoribosyl)anthranilate isomerase from Lacticaseibacillus casei (strain BL23) (Lactobacillus casei).